The following is a 213-amino-acid chain: Large ribosomal subunit protein uL3 (213 aa).

N5-methylglutamine is present on glutamine 151.

This sequence belongs to the universal ribosomal protein uL3 family. As to quaternary structure, part of the 50S ribosomal subunit. Forms a cluster with proteins L14 and L19. Methylated by PrmB.

One of the primary rRNA binding proteins, it binds directly near the 3'-end of the 23S rRNA, where it nucleates assembly of the 50S subunit. This chain is Large ribosomal subunit protein uL3, found in Rhizobium etli (strain CIAT 652).